Consider the following 153-residue polypeptide: Protein eva-1 homolog A (153 aa).

A helical transmembrane segment spans residues 37–57; the sequence is ALYFVCGVCLGLVLTLIALVV. The segment at 66–97 is disordered; the sequence is KTQQAPKKTGKTVENTSDTSDSDSDWDNTSDL.

Belongs to the EVA1 family.

The protein localises to the endoplasmic reticulum membrane. It is found in the lysosome membrane. Functionally, acts as a regulator of programmed cell death, mediating both autophagy and apoptosis. The chain is Protein eva-1 homolog A (Eva1a) from Danio rerio (Zebrafish).